We begin with the raw amino-acid sequence, 212 residues long: Imidazole glycerol phosphate synthase subunit HisH (212 aa).

Residues 1–211 form the Glutamine amidotransferase type-1 domain; sequence MIGVIDYGMG…KQFTQEQKVK (211 aa). Cys-79 functions as the Nucleophile in the catalytic mechanism. Active-site residues include His-186 and Glu-188.

As to quaternary structure, heterodimer of HisH and HisF.

It is found in the cytoplasm. The enzyme catalyses 5-[(5-phospho-1-deoxy-D-ribulos-1-ylimino)methylamino]-1-(5-phospho-beta-D-ribosyl)imidazole-4-carboxamide + L-glutamine = D-erythro-1-(imidazol-4-yl)glycerol 3-phosphate + 5-amino-1-(5-phospho-beta-D-ribosyl)imidazole-4-carboxamide + L-glutamate + H(+). It carries out the reaction L-glutamine + H2O = L-glutamate + NH4(+). The protein operates within amino-acid biosynthesis; L-histidine biosynthesis; L-histidine from 5-phospho-alpha-D-ribose 1-diphosphate: step 5/9. IGPS catalyzes the conversion of PRFAR and glutamine to IGP, AICAR and glutamate. The HisH subunit catalyzes the hydrolysis of glutamine to glutamate and ammonia as part of the synthesis of IGP and AICAR. The resulting ammonia molecule is channeled to the active site of HisF. This is Imidazole glycerol phosphate synthase subunit HisH from Bacillus licheniformis (strain ATCC 14580 / DSM 13 / JCM 2505 / CCUG 7422 / NBRC 12200 / NCIMB 9375 / NCTC 10341 / NRRL NRS-1264 / Gibson 46).